A 243-amino-acid chain; its full sequence is ATP synthase subunit a (243 aa).

The next 7 helical transmembrane spans lie at 29 to 49 (NASL…YIGL), 54 to 74 (IIPN…VSTI), 89 to 109 (VFTI…PLGF), 114 to 134 (HIAV…IIGF), 144 to 164 (ILLP…IELF), 182 to 202 (IAGH…NIFL), and 208 to 228 (IFII…AYIF).

This sequence belongs to the ATPase A chain family. F-type ATPases have 2 components, CF(1) - the catalytic core - and CF(0) - the membrane proton channel. CF(1) has five subunits: alpha(3), beta(3), gamma(1), delta(1), epsilon(1). CF(0) has three main subunits: a(1), b(2) and c(9-12). The alpha and beta chains form an alternating ring which encloses part of the gamma chain. CF(1) is attached to CF(0) by a central stalk formed by the gamma and epsilon chains, while a peripheral stalk is formed by the delta and b chains.

It is found in the cell inner membrane. In terms of biological role, key component of the proton channel; it plays a direct role in the translocation of protons across the membrane. The polypeptide is ATP synthase subunit a (Ehrlichia canis (strain Jake)).